The chain runs to 284 residues: MPRYAQLVMGPAGSGKSTYCATMVQHCEALNRSVQVVNLDPAAEHFNYSVMADIRELIEVDDVMEDSTLQFGPNGGLVFCMEYFANNFDWLENCLGHVEDDYILFDCPGQIELYTHLPVMKQLVQQLEQWEFRVCGVFLVDSQFMVESFKFISGILAALSAMISLEIPQVNVMTKMDLLSKKAKKEIEKFLDPDMYSLLDDSTSDLRSKKFKKLTNAICGLIDDYSMVRFLPYDQSDEESMNIVLQHIDFAIQYGEDLEFKEPKEHEDESSSMFDEYFQEHQNE.

Glycine 13–threonine 18 contributes to the GTP binding site. The Gly-Pro-Asn (GPN)-loop; involved in dimer interface motif lies at glycine 72–asparagine 74. Threonine 174–aspartate 177 serves as a coordination point for GTP. The interval lysine 261 to glutamate 284 is disordered.

This sequence belongs to the GPN-loop GTPase family. Heterodimer with GPN1. Binds to RNA polymerase II (RNAPII). Interacts directly with subunits RPB4 and RPB7 and the CTD of RPB1.

In terms of biological role, small GTPase required for proper localization of RNA polymerase II (RNAPII). May act at an RNAP assembly step prior to nuclear import. The sequence is that of GPN-loop GTPase 3 from Bos taurus (Bovine).